The chain runs to 257 residues: Tryptophan synthase alpha chain (257 aa).

Residues Glu-47 and Asp-58 each act as proton acceptor in the active site.

This sequence belongs to the TrpA family. Tetramer of two alpha and two beta chains.

It catalyses the reaction (1S,2R)-1-C-(indol-3-yl)glycerol 3-phosphate + L-serine = D-glyceraldehyde 3-phosphate + L-tryptophan + H2O. It participates in amino-acid biosynthesis; L-tryptophan biosynthesis; L-tryptophan from chorismate: step 5/5. Its function is as follows. The alpha subunit is responsible for the aldol cleavage of indoleglycerol phosphate to indole and glyceraldehyde 3-phosphate. The protein is Tryptophan synthase alpha chain of Listeria innocua serovar 6a (strain ATCC BAA-680 / CLIP 11262).